The chain runs to 63 residues: Conotoxin Pn-B01411 (63 aa).

The signal sequence occupies residues 1 to 22 (MRCFPVFIILLLLMASAPSFDA). Residues 23–49 (RPKTEDDVPLSSFRDNLKRTLRTLLDP) constitute a propeptide that is removed on maturation. Isoleucine 62 carries the isoleucine amide modification.

The protein belongs to the conotoxin T superfamily. Post-translationally, contains 2 disulfide bonds that can be either 'C1-C3, C2-C4' or 'C1-C4, C2-C3', since these disulfide connectivities have been observed for conotoxins with cysteine framework V (for examples, see AC P0DQQ7 and AC P81755). In terms of tissue distribution, expressed by the venom duct.

It is found in the secreted. This Conus pennaceus (Feathered cone) protein is Conotoxin Pn-B01411.